The sequence spans 30 residues: Cycloviolacin-O24 (30 aa).

A cross-link (cyclopeptide (Gly-Asn)) is located at residues 1-30 (GLPTCGETCFGGTCNTPGCTCDPWPVCTHN). Disulfide bonds link Cys-5–Cys-19, Cys-9–Cys-21, and Cys-14–Cys-27.

In terms of processing, this is a cyclic peptide. In terms of tissue distribution, expressed in leaves but not in petals, petioles, roots and runners (at protein level).

Functionally, probably participates in a plant defense mechanism. Has hemolytic activity. This Viola odorata (Sweet violet) protein is Cycloviolacin-O24.